The chain runs to 607 residues: Elongation factor 4 (607 aa).

The tr-type G domain maps to 11 to 193 (SRIRNFSIIA…QVVEKVPAPA (183 aa)). Residues 23–28 (DHGKST) and 140–143 (NKID) each bind GTP.

Belongs to the TRAFAC class translation factor GTPase superfamily. Classic translation factor GTPase family. LepA subfamily.

The protein resides in the cell membrane. It catalyses the reaction GTP + H2O = GDP + phosphate + H(+). Its function is as follows. Required for accurate and efficient protein synthesis under certain stress conditions. May act as a fidelity factor of the translation reaction, by catalyzing a one-codon backward translocation of tRNAs on improperly translocated ribosomes. Back-translocation proceeds from a post-translocation (POST) complex to a pre-translocation (PRE) complex, thus giving elongation factor G a second chance to translocate the tRNAs correctly. Binds to ribosomes in a GTP-dependent manner. The polypeptide is Elongation factor 4 (Shouchella clausii (strain KSM-K16) (Alkalihalobacillus clausii)).